The chain runs to 55 residues: Large ribosomal subunit protein bL33 (55 aa).

The protein belongs to the bacterial ribosomal protein bL33 family.

In Leifsonia xyli subsp. xyli (strain CTCB07), this protein is Large ribosomal subunit protein bL33.